Consider the following 418-residue polypeptide: Putative competence-damage inducible protein (418 aa).

Belongs to the CinA family.

This chain is Putative competence-damage inducible protein, found in Streptococcus pneumoniae serotype 19F (strain G54).